A 152-amino-acid chain; its full sequence is Deoxyuridine 5'-triphosphate nucleotidohydrolase (152 aa).

Substrate contacts are provided by residues 71-73 (RSG), N84, 88-90 (LID), and M98.

This sequence belongs to the dUTPase family. Mg(2+) is required as a cofactor.

It carries out the reaction dUTP + H2O = dUMP + diphosphate + H(+). It functions in the pathway pyrimidine metabolism; dUMP biosynthesis; dUMP from dCTP (dUTP route): step 2/2. Its function is as follows. This enzyme is involved in nucleotide metabolism: it produces dUMP, the immediate precursor of thymidine nucleotides and it decreases the intracellular concentration of dUTP so that uracil cannot be incorporated into DNA. This is Deoxyuridine 5'-triphosphate nucleotidohydrolase from Shewanella woodyi (strain ATCC 51908 / MS32).